The following is a 1141-amino-acid chain: DNA-directed RNA polymerase subunit beta (1141 aa).

Residues 1117 to 1141 are disordered; it reads GINISREEPPGQLDDTPDTFSRGGM.

The protein belongs to the RNA polymerase beta chain family. As to quaternary structure, the RNAP catalytic core consists of 2 alpha, 1 beta, 1 beta' and 1 omega subunit. When a sigma factor is associated with the core the holoenzyme is formed, which can initiate transcription.

The enzyme catalyses RNA(n) + a ribonucleoside 5'-triphosphate = RNA(n+1) + diphosphate. Functionally, DNA-dependent RNA polymerase catalyzes the transcription of DNA into RNA using the four ribonucleoside triphosphates as substrates. This is DNA-directed RNA polymerase subunit beta from Rubrobacter xylanophilus (strain DSM 9941 / JCM 11954 / NBRC 16129 / PRD-1).